The following is a 1075-amino-acid chain: Nuclear factor of activated T-cells, cytoplasmic 3 (1075 aa).

T2 carries the post-translational modification N-acetylthreonine. The segment at 18-37 (FGEDGAPAPPPPGSRPADLE) is disordered. Residues 109–114 (PSIQIT) form a calcineurin-binding region. Residues 205-306 (LGSPLTSPGG…PGHSPRGSVT (102 aa)) are disordered. A run of 2 repeats spans residues 207-223 (SPLT…PGEE) and 236-252 (SPRQ…VTDE). The tract at residues 207 to 308 (SPLTSPGGSP…HSPRGSVTED (102 aa)) is 3 X SP repeats. Positions 236–253 (SPRQSPCHSPRSSVTDEN) are enriched in polar residues. Over residues 256–270 (SPRPASGPSSRPTSP) the composition is skewed to low complexity. Residues 273-275 (KRR) carry the Nuclear localization signal motif. The stretch at 292–308 (SPVPSPGHSPRGSVTED) is repeat 3. 2 positions are modified to phosphoserine: S344 and S372. Residues 415–596 (SSLPPLDWPL…IPVECSQRSA (182 aa)) form the RHD domain. Residues 444-451 (RAHYETEG) mediate DNA binding. Residues 686 to 688 (KRK) carry the Nuclear localization signal motif. Disordered stretches follow at residues 711–739 (DLSS…SHDS) and 887–988 (SNTG…GLSA). Composition is skewed to polar residues over residues 724-739 (AQTQ…SHDS) and 887-912 (SNTG…QLQP). Composition is skewed to low complexity over residues 916–939 (GPSH…SSPL) and 949–967 (PMPY…SPAT). Over residues 970–981 (HSGQHSTQAQST) the composition is skewed to polar residues. Positions 1032 to 1041 (TLDDVNEIIG) match the Nuclear export signal motif. The disordered stretch occupies residues 1049–1075 (VSQGAGVSRQAPLPSPESLDLGRSDGL). Phosphoserine occurs at positions 1063 and 1066.

As to quaternary structure, NFATC proteins bind to DNA as monomers. Member of the multicomponent NFATC transcription complex that consists of at least two components, a pre-existing cytoplasmic component NFATC2 and an inducible nuclear component NFATC1. Other members such as NFATC4, or members of the activating protein-1 family, MAF, GATA4 and Cbp/p300 can also bind the complex. Component of a promoter-binding complex composed of STAT3, NFATC3 and NFATC4; complex formation is enhanced by calcineurin. Interacts with TRIM17; this interaction prevents NFATC3 nuclear localization. Interacts with and ubiquitinated by STUB1/CHIP; HSPA1A/HSP70 is required as a co-chaperone. Ubiquitinated by STUB1/CHIP, leading to proteasomal degradation. In terms of processing, phosphorylated by NFATC-kinase; dephosphorylated by calcineurin. As to expression, predominantly expressed in thymus and is also found in peripheral blood leukocytes and kidney. In terms of tissue distribution, predominantly expressed in skeletal muscle. Also found weakly expressed in the thymus, kidney, testis, spleen, prostate, ovary, small intestine, heart, placenta and pancreas. Expressed in thymus and kidney. As to expression, expressed in thymus and skeletal muscle.

It is found in the cytoplasm. The protein localises to the nucleus. Functionally, acts as a regulator of transcriptional activation. Binds to the TNFSF11/RANKL promoter region and promotes TNFSF11 transcription. Binding to the TNFSF11 promoter region is increased by high levels of Ca(2+) which induce NFATC3 expression and may lead to regulation of TNFSF11 expression in osteoblasts. Plays a role in promoting mesenteric arterial wall remodeling in response to the intermittent hypoxia-induced increase in EDN1 and ROCK signaling. As a result NFATC3 colocalizes with F-actin filaments, translocates to the nucleus and promotes transcription of the smooth muscle hypertrophy and differentiation marker ACTA2. Promotes lipopolysaccharide-induced apoptosis and hypertrophy in cardiomyocytes. Following JAK/STAT signaling activation and as part of a complex with NFATC4 and STAT3, binds to the alpha-beta E4 promoter region of CRYAB and activates transcription in cardiomyocytes. In conjunction with NFATC4, involved in embryonic heart development via maintenance of cardiomyocyte survival, proliferation and differentiation. Plays a role in the inducible expression of cytokine genes in T-cells, especially in the induction of the IL-2. Required for thymocyte maturation during DN3 to DN4 transition and during positive selection. Positively regulates macrophage-derived polymicrobial clearance, via binding to the promoter region and promoting transcription of NOS2 resulting in subsequent generation of nitric oxide. Involved in Ca(2+)-mediated transcriptional responses upon Ca(2+) influx via ORAI1 CRAC channels. The polypeptide is Nuclear factor of activated T-cells, cytoplasmic 3 (Homo sapiens (Human)).